The primary structure comprises 1037 residues: Sentrin-specific protease 7 (1037 aa).

Positions 1–10 are enriched in basic residues; sequence MDRARPGRRR. Disordered regions lie at residues 1–28 and 182–420; these read MDRARPGRRRASSEIVTEGKRKKSSPAD and ASLS…SEEN. S12, S13, S25, and S189 each carry phosphoserine. 2 stretches are compositionally biased toward polar residues: residues 182–211 and 253–263; these read ASLSDTASPKSEELSSSADGSLESCQNVNH and TPQSKDFNSGN. A compositionally biased stretch (basic residues) spans 289–299; that stretch reads VSRKRKKRGRS. Residues 300-309 are compositionally biased toward polar residues; sequence NFHNSHNPKS. Basic and acidic residues-rich tracts occupy residues 310 to 320 and 330 to 340; these read SVDKSTEYIKE and KLEESNEDSHQ. Positions 381-399 are enriched in low complexity; that stretch reads NKSSESSVSSEVAENSSAA. Residues S432 and S433 each carry the phosphoserine modification. Positions 747–1037 are protease; the sequence is LGVTNEDLEC…HLQQQKGSSS (291 aa). The active site involves H847. The disordered stretch occupies residues 873–910; that stretch reads EFQDQQSQHDNKTIDNDPHTTSTVFTSAEESQSTETSM. Basic and acidic residues predominate over residues 879–890; that stretch reads SQHDNKTIDNDP. The segment covering 898 to 910 has biased composition (low complexity); it reads TSAEESQSTETSM. D926 is an active-site residue. C979 acts as the Nucleophile in catalysis.

It belongs to the peptidase C48 family.

It is found in the cytoplasm. Functionally, protease that acts as a positive regulator of the cGAS-STING pathway by catalyzing desumoylation of CGAS. Desumoylation of CGAS promotes DNA-binding activity of CGAS, subsequent oligomerization and activation. Deconjugates SUMO2 and SUMO3 from targeted proteins, but not SUMO1. Catalyzes the deconjugation of poly-SUMO2 and poly-SUMO3 chains. Has very low efficiency in processing full-length SUMO proteins to their mature forms. The sequence is that of Sentrin-specific protease 7 (Senp7) from Rattus norvegicus (Rat).